The following is a 360-amino-acid chain: GTPase Obg (360 aa).

The region spanning 1–156 (MFVDSVEIII…KCVRLELKLI (156 aa)) is the Obg domain. Residues 157–360 (ADIGLVGFPN…LKFVLLEALP (204 aa)) form the OBG-type G domain. GTP-binding positions include 163-170 (GFPNAGKS), 188-192 (FTTLV), 210-213 (DIPG), 279-282 (NKCD), and 341-343 (SAL). 2 residues coordinate Mg(2+): S170 and T190.

This sequence belongs to the TRAFAC class OBG-HflX-like GTPase superfamily. OBG GTPase family. As to quaternary structure, monomer. Mg(2+) serves as cofactor.

Its subcellular location is the cytoplasm. An essential GTPase which binds GTP, GDP and possibly (p)ppGpp with moderate affinity, with high nucleotide exchange rates and a fairly low GTP hydrolysis rate. Plays a role in control of the cell cycle, stress response, ribosome biogenesis and in those bacteria that undergo differentiation, in morphogenesis control. This chain is GTPase Obg, found in Helicobacter pylori (strain Shi470).